Here is a 103-residue protein sequence, read N- to C-terminus: MTNFTTSTPHDALFKTFLTHPDTARDFMEIHLPKDLRELCDLDSLKLESASFVDEKLRALHSDILWSVKTREGDGYIYVVIEHQSREDIHMAFRLMRYSMAVM.

The protein belongs to the Rpn/YhgA-like nuclease family.

In terms of biological role, this pseudogene is the N-terminal fragment of low activity DNA endonuclease RpnD which probably yields 3'-hydroxyl ends. The intact protein can be seen in this entry (AC B7NGZ6). Expression of the repaired protein increases the frequency of recA-independent recombination, but also decreases viability probably via DNA damage; in a RecA strain expression has no effect on viability but does induce the SOS repair response. May play a role in horizontal gene transfer. The protein is Putative inactive recombination-promoting nuclease-like protein YjiP (yjiP) of Escherichia coli (strain K12).